The primary structure comprises 1155 residues: DNA-directed RNA polymerase subunit beta (1155 aa).

The protein belongs to the RNA polymerase beta chain family. As to quaternary structure, the RNAP catalytic core consists of 2 alpha, 1 beta, 1 beta' and 1 omega subunit. When a sigma factor is associated with the core the holoenzyme is formed, which can initiate transcription.

It catalyses the reaction RNA(n) + a ribonucleoside 5'-triphosphate = RNA(n+1) + diphosphate. Its function is as follows. DNA-dependent RNA polymerase catalyzes the transcription of DNA into RNA using the four ribonucleoside triphosphates as substrates. This Borrelia recurrentis (strain A1) protein is DNA-directed RNA polymerase subunit beta.